A 1234-amino-acid polypeptide reads, in one-letter code: DNA-directed RNA polymerase subunit beta (1234 aa).

It belongs to the RNA polymerase beta chain family. In terms of assembly, the RNAP catalytic core consists of 2 alpha, 1 beta, 1 beta' and 1 omega subunit. When a sigma factor is associated with the core the holoenzyme is formed, which can initiate transcription.

The catalysed reaction is RNA(n) + a ribonucleoside 5'-triphosphate = RNA(n+1) + diphosphate. Functionally, DNA-dependent RNA polymerase catalyzes the transcription of DNA into RNA using the four ribonucleoside triphosphates as substrates. The protein is DNA-directed RNA polymerase subunit beta of Clostridium perfringens (strain SM101 / Type A).